Reading from the N-terminus, the 125-residue chain is Holo-[acyl-carrier-protein] synthase (125 aa).

Residues D8 and E57 each contribute to the Mg(2+) site.

The protein belongs to the P-Pant transferase superfamily. AcpS family. Requires Mg(2+) as cofactor.

It is found in the cytoplasm. The enzyme catalyses apo-[ACP] + CoA = holo-[ACP] + adenosine 3',5'-bisphosphate + H(+). Functionally, transfers the 4'-phosphopantetheine moiety from coenzyme A to a Ser of acyl-carrier-protein. This is Holo-[acyl-carrier-protein] synthase from Aromatoleum aromaticum (strain DSM 19018 / LMG 30748 / EbN1) (Azoarcus sp. (strain EbN1)).